The chain runs to 285 residues: Acetyl-coenzyme A carboxylase carboxyl transferase subunit beta (285 aa).

The 264-residue stretch at 22–285 (LWTKCEACGA…HPGVAYAPGV (264 aa)) folds into the CoA carboxyltransferase N-terminal domain. Zn(2+)-binding residues include C26, C29, C45, and C48. The C4-type zinc-finger motif lies at 26–48 (CEACGAQIYKKEFQENLHVCPKC).

The protein belongs to the AccD/PCCB family. Acetyl-CoA carboxylase is a heterohexamer composed of biotin carboxyl carrier protein (AccB), biotin carboxylase (AccC) and two subunits each of ACCase subunit alpha (AccA) and ACCase subunit beta (AccD). Requires Zn(2+) as cofactor.

Its subcellular location is the cytoplasm. It catalyses the reaction N(6)-carboxybiotinyl-L-lysyl-[protein] + acetyl-CoA = N(6)-biotinyl-L-lysyl-[protein] + malonyl-CoA. The protein operates within lipid metabolism; malonyl-CoA biosynthesis; malonyl-CoA from acetyl-CoA: step 1/1. In terms of biological role, component of the acetyl coenzyme A carboxylase (ACC) complex. Biotin carboxylase (BC) catalyzes the carboxylation of biotin on its carrier protein (BCCP) and then the CO(2) group is transferred by the transcarboxylase to acetyl-CoA to form malonyl-CoA. This chain is Acetyl-coenzyme A carboxylase carboxyl transferase subunit beta, found in Thermus thermophilus (strain ATCC BAA-163 / DSM 7039 / HB27).